We begin with the raw amino-acid sequence, 421 residues long: Testin (421 aa).

One can recognise a PET domain in the interval 92–199 (MILTNPVAAK…GDVKLPCEMD (108 aa)). Residues 133-164 (EKQPVAGSEGAQYRKKQLAKQLPAHDQDPSKC) are disordered. Residues 155-164 (PAHDQDPSKC) are compositionally biased toward basic and acidic residues. 3 consecutive LIM zinc-binding domains span residues 234–297 (YSCY…CDSE), 299–359 (PRCA…NHAV), and 362–421 (QGCH…KMMS).

This sequence belongs to the prickle / espinas / testin family. As to quaternary structure, interacts via LIM domain 1 with ZYX. Interacts (via LIM domain 3) with ENAH and VASP. Interacts with ALKBH4, talin, actin, alpha-actinin, GRIP1 and PXN. Interacts (via LIM domain 2) with ACTL7A (via N-terminus). Heterodimer with ACTL7A; the heterodimer interacts with ENAH to form a heterotrimer.

It is found in the cytoplasm. The protein localises to the cell junction. Its subcellular location is the focal adhesion. Functionally, scaffold protein that may play a role in cell adhesion, cell spreading and in the reorganization of the actin cytoskeleton. Plays a role in the regulation of cell proliferation. May act as a tumor suppressor. This is Testin (TES) from Callithrix jacchus (White-tufted-ear marmoset).